A 291-amino-acid chain; its full sequence is Proline iminopeptidase (291 aa).

Positions Leu-30–Asp-274 constitute an AB hydrolase-1 domain. Catalysis depends on Ser-103, which acts as the Nucleophile. The active site involves Asp-242. Residue His-269 is the Proton donor of the active site.

It belongs to the peptidase S33 family.

It is found in the cell envelope. It carries out the reaction Release of N-terminal proline from a peptide.. Its function is as follows. Releases the N-terminal proline from various substrates. This is Proline iminopeptidase from Lacticaseibacillus rhamnosus (strain Lc 705) (Lactobacillus rhamnosus).